The sequence spans 216 residues: Cytidylate kinase (216 aa).

7 to 15 lines the ATP pocket; sequence GPSGTGKST.

The protein belongs to the cytidylate kinase family. Type 1 subfamily.

The protein localises to the cytoplasm. It carries out the reaction CMP + ATP = CDP + ADP. The enzyme catalyses dCMP + ATP = dCDP + ADP. The protein is Cytidylate kinase of Chlamydia trachomatis serovar A (strain ATCC VR-571B / DSM 19440 / HAR-13).